A 365-amino-acid polypeptide reads, in one-letter code: UDP-N-acetylglucosamine--N-acetylmuramyl-(pentapeptide) pyrophosphoryl-undecaprenol N-acetylglucosamine transferase (365 aa).

Residues 10 to 12, Asn-124, Arg-165, Ser-193, Ile-248, and Gln-293 contribute to the UDP-N-acetyl-alpha-D-glucosamine site; that span reads TGG.

Belongs to the glycosyltransferase 28 family. MurG subfamily.

The protein resides in the cell inner membrane. The catalysed reaction is di-trans,octa-cis-undecaprenyl diphospho-N-acetyl-alpha-D-muramoyl-L-alanyl-D-glutamyl-meso-2,6-diaminopimeloyl-D-alanyl-D-alanine + UDP-N-acetyl-alpha-D-glucosamine = di-trans,octa-cis-undecaprenyl diphospho-[N-acetyl-alpha-D-glucosaminyl-(1-&gt;4)]-N-acetyl-alpha-D-muramoyl-L-alanyl-D-glutamyl-meso-2,6-diaminopimeloyl-D-alanyl-D-alanine + UDP + H(+). It functions in the pathway cell wall biogenesis; peptidoglycan biosynthesis. Functionally, cell wall formation. Catalyzes the transfer of a GlcNAc subunit on undecaprenyl-pyrophosphoryl-MurNAc-pentapeptide (lipid intermediate I) to form undecaprenyl-pyrophosphoryl-MurNAc-(pentapeptide)GlcNAc (lipid intermediate II). This Geotalea uraniireducens (strain Rf4) (Geobacter uraniireducens) protein is UDP-N-acetylglucosamine--N-acetylmuramyl-(pentapeptide) pyrophosphoryl-undecaprenol N-acetylglucosamine transferase.